Reading from the N-terminus, the 188-residue chain is ATP synthase subunit delta (188 aa).

Belongs to the ATPase delta chain family. In terms of assembly, F-type ATPases have 2 components, F(1) - the catalytic core - and F(0) - the membrane proton channel. F(1) has five subunits: alpha(3), beta(3), gamma(1), delta(1), epsilon(1). F(0) has three main subunits: a(1), b(2) and c(10-14). The alpha and beta chains form an alternating ring which encloses part of the gamma chain. F(1) is attached to F(0) by a central stalk formed by the gamma and epsilon chains, while a peripheral stalk is formed by the delta and b chains.

It is found in the cell inner membrane. In terms of biological role, f(1)F(0) ATP synthase produces ATP from ADP in the presence of a proton or sodium gradient. F-type ATPases consist of two structural domains, F(1) containing the extramembraneous catalytic core and F(0) containing the membrane proton channel, linked together by a central stalk and a peripheral stalk. During catalysis, ATP synthesis in the catalytic domain of F(1) is coupled via a rotary mechanism of the central stalk subunits to proton translocation. This protein is part of the stalk that links CF(0) to CF(1). It either transmits conformational changes from CF(0) to CF(1) or is implicated in proton conduction. The protein is ATP synthase subunit delta of Agrobacterium fabrum (strain C58 / ATCC 33970) (Agrobacterium tumefaciens (strain C58)).